The sequence spans 243 residues: MHGAAVTPPSTVSPTPVPTQSAPLSVALVSHRCPDPCEVTGFHSRRVHEPCEIRPSDDVVLFYGPRMGQELRRFSTEANGGLPPFAVLATCLDWDDVCLALDSGAIGYLLEIEDPDLLAAALHCISHGHTILAPQIAEHARVTSCPGGALRQTAAVARPDTSGSATGRTGDSSPSLALSPQEREIMTRLASGLSVREIAVEMRLAEKTVRNYLSHIYGKLGVRSRSQALLRWLGHPGGETAHH.

A disordered region spans residues alanine 154–serine 179. Residues threonine 161–leucine 178 show a composition bias toward polar residues. Residues aspartate 171 to proline 236 form the HTH luxR-type domain. The segment at residues valine 195–serine 214 is a DNA-binding region (H-T-H motif).

It participates in antibiotic biosynthesis. In terms of biological role, probable DNA-binding protein that contributes to the control of expression of the biosynthesis operon of the 16-membered macrolide antibiotics FD-891 and FD-892. Might be a member of a two-component regulatory system; the putative sensor kinase gene is unknown. The sequence is that of Probable HTH-type transcriptional regulator GfsR from Streptomyces halstedii.